A 232-amino-acid chain; its full sequence is Glutathione-specific gamma-glutamylcyclotransferase (232 aa).

10–15 contributes to the substrate binding site; that stretch reads VLGYGS. The active-site Proton acceptor is E115.

Belongs to the gamma-glutamylcyclotransferase family. ChaC subfamily.

It localises to the cytoplasm. The protein resides in the nucleus. The enzyme catalyses glutathione = L-cysteinylglycine + 5-oxo-L-proline. Catalyzes the cleavage of glutathione into 5-oxo-L-proline and a Cys-Gly dipeptide. Acts specifically on glutathione, but not on other gamma-glutamyl peptides. Allows utilization of gluthathione through subsequent cleavage of the Cys-Gly dipeptide by Cys-Gly metallodipeptidase DUG1. The protein is Glutathione-specific gamma-glutamylcyclotransferase of Saccharomyces cerevisiae (strain ATCC 204508 / S288c) (Baker's yeast).